Consider the following 43-residue polypeptide: Metallothionein B (43 aa).

Residues 1 to 16 (SCAGSCKCKNCRCRSC) form a beta region. A divalent metal cation-binding residues include Cys2, Cys6, Cys8, Cys11, Cys13, Cys16, Cys20, Cys21, Cys23, Cys24, Cys28, Cys31, Cys35, and Cys37. Residues 17–43 (RKSCCSCCPAGCNNCVKGCVCKEPASS) are alpha.

The protein belongs to the metallothionein superfamily. Type 1 family.

Its function is as follows. Metallothioneins have a high content of cysteine residues that bind various heavy metals. The chain is Metallothionein B from Colinus virginianus (Northern bobwhite).